The following is a 287-amino-acid chain: Pantothenate synthetase (287 aa).

30-37 (MGALHEGH) serves as a coordination point for ATP. Residue histidine 37 is the Proton donor of the active site. Glutamine 61 lines the (R)-pantoate pocket. Glutamine 61 lines the beta-alanine pocket. An ATP-binding site is contributed by 147–150 (GEKD). Residue glutamine 153 coordinates (R)-pantoate. 184–187 (MSSR) contributes to the ATP binding site.

The protein belongs to the pantothenate synthetase family. Homodimer.

It is found in the cytoplasm. It carries out the reaction (R)-pantoate + beta-alanine + ATP = (R)-pantothenate + AMP + diphosphate + H(+). It functions in the pathway cofactor biosynthesis; (R)-pantothenate biosynthesis; (R)-pantothenate from (R)-pantoate and beta-alanine: step 1/1. Its function is as follows. Catalyzes the condensation of pantoate with beta-alanine in an ATP-dependent reaction via a pantoyl-adenylate intermediate. The sequence is that of Pantothenate synthetase from Granulibacter bethesdensis (strain ATCC BAA-1260 / CGDNIH1).